The primary structure comprises 122 residues: MRHYEIVFIVHPDQSEQVPAMVERYKTMIAEANGKIHRLEDWGRRQLAYPINKIHKAHYVLMNIETTPEVVEELETAFRFNDAVLRHLTIKTKHAVTEASPMLGGEKAKNLLSGASEEAVAQ.

This sequence belongs to the bacterial ribosomal protein bS6 family.

In terms of biological role, binds together with bS18 to 16S ribosomal RNA. The chain is Small ribosomal subunit protein bS6 from Neisseria meningitidis serogroup C (strain 053442).